The sequence spans 381 residues: Phthiodiolone/phenolphthiodiolone dimycocerosates ketoreductase (381 aa).

The protein belongs to the mer family. Phthiodiolone/phenolphthiodiolone dimycocerosates ketoreductase subfamily.

Catalyzes the reduction of the keto moiety of phthiodiolone dimycocerosates (DIM B) and glycosylated phenolphthiodiolone dimycocerosates to form the intermediate compounds phthiotriol and glycosylated phenolphthiotriol dimycocerosates during phthiocerol dimycocerosates (DIM A) and glycosylated phenolphthiocerol dimycocerosates (PGL) biosynthesis. The chain is Phthiodiolone/phenolphthiodiolone dimycocerosates ketoreductase from Mycobacterium tuberculosis (strain CDC 1551 / Oshkosh).